A 348-amino-acid polypeptide reads, in one-letter code: Rhodopsin (348 aa).

The residue at position 1 (Met-1) is an N-acetylmethionine. Residues 1 to 36 (MNGTEGPNFYVPFSNKTGVVRSPFEYPQYYLAEPWQ) are Extracellular-facing. Residues Asn-2 and Asn-15 are each glycosylated (N-linked (GlcNAc...) asparagine). Residues 37–61 (FSMLAAYMFLLIVLGFPINFLTLYV) traverse the membrane as a helical segment. Residues 62-73 (TVQHKKLRTPLN) are Cytoplasmic-facing. Residues 74 to 96 (YILLNLAVADLFMVFGGFTTTLY) form a helical membrane-spanning segment. The Extracellular portion of the chain corresponds to 97 to 110 (TSLHGYFVFGPTGC). Cys-110 and Cys-187 are joined by a disulfide. The helical transmembrane segment at 111–133 (NVEGFFATLGGEIALWSLVVLAI) threads the bilayer. A 'Ionic lock' involved in activated form stabilization motif is present at residues 134 to 136 (ERY). Topologically, residues 134–152 (ERYVVVCKPMSNFRFGENH) are cytoplasmic. The helical transmembrane segment at 153–173 (AIMGVAFTWVMALACAAPPLA) threads the bilayer. Residues 174 to 202 (GWSRYIPEGMQCSCGIDYYTLKPEVNNES) lie on the Extracellular side of the membrane. Residue Glu-201 participates in Zn(2+) binding. The helical transmembrane segment at 203–224 (FVIYMFVVHFTIPMIVIFFCYG) threads the bilayer. The Cytoplasmic segment spans residues 225–252 (QLVFTVKEAAAQQQESATTQKAEKEVTR). The chain crosses the membrane as a helical span at residues 253–274 (MVIIMVIAFLICWVPYASVAFY). Residues 275–286 (IFTHQGSNFGPI) are Extracellular-facing. Residue Gln-279 participates in Zn(2+) binding. Residues 287 to 308 (FMTLPAFFAKSASIYNPVIYIM) form a helical membrane-spanning segment. N6-(retinylidene)lysine is present on Lys-296. Residues 309–348 (MNKQFRNCMLTTICCGKNPFAEEEGATTVSKTETSQVAPA) are Cytoplasmic-facing. Residues Cys-322 and Cys-323 are each lipidated (S-palmitoyl cysteine). Residues 330–348 (EEEGATTVSKTETSQVAPA) form an interaction with SAG region. Phosphothreonine occurs at positions 335 and 336. A Phosphoserine modification is found at Ser-338. Residues Thr-340 and Thr-342 each carry the phosphothreonine modification. Ser-343 bears the Phosphoserine mark.

This sequence belongs to the G-protein coupled receptor 1 family. Opsin subfamily. In terms of assembly, homodimer. May form a complex composed of RHO, GRK1 and RCVRN in a Ca(2+)-dependent manner; RCVRN prevents the interaction between GRK1 and RHO. Interacts with GRK1. Interacts (phosphorylated form) with SAG. Interacts with GNAT1. Interacts with GNAT3. SAG and G-proteins compete for a common binding site. Interacts with PRCD; the interaction promotes PRCD stability. Forms a complex with ASAP1 and ARF4. Forms a complex with ASAP1, RAB11A, Rabin8/RAB3IP, ARF4 and RAB11FIP3; the complex regulates Golgi-to-cilia rhodopsin/RHO transport in photoreceptors. Phosphorylated on some or all of the serine and threonine residues present in the C-terminal region. Post-translationally, contains one covalently linked retinal chromophore. Upon light absorption, the covalently bound 11-cis-retinal is converted to all-trans-retinal. After hydrolysis of the Schiff base and release of the covalently bound all-trans-retinal, active rhodopsin is regenerated by binding of a fresh molecule of 11-cis-retinal.

The protein resides in the membrane. Its subcellular location is the cell projection. It is found in the cilium. The protein localises to the photoreceptor outer segment. Functionally, photoreceptor required for image-forming vision at low light intensity. Required for photoreceptor cell viability after birth. Light-induced isomerization of 11-cis to all-trans retinal triggers a conformational change that activates signaling via G-proteins. Subsequent receptor phosphorylation mediates displacement of the bound G-protein alpha subunit by the arrestin SAG and terminates signaling. This Trichechus manatus (Caribbean manatee) protein is Rhodopsin (RHO).